The sequence spans 211 residues: Nucleoside diphosphate kinase homolog 5 (211 aa).

Residues 13 to 145 (EKTLALIKPD…EREIRFMFPA (133 aa)) form an NDK region.

This sequence belongs to the NDK family. As to quaternary structure, component of the axonemal radial spoke complex 1 (RS1), at least composed of spoke head proteins RSPH1, RSPH3, RSPH9 and the cilia-specific component RSPH4A or sperm-specific component RSPH6A, spoke stalk proteins RSPH14, DNAJB13, DYDC1, ROPN1L and NME5, and the anchor protein IQUB. Interacts with IQUB. As to expression, expressed in the trachea, ependymal cells and oviduct (at protein level). Expressed predominantly in germ cells of the testis. Not expressed in testicular somatic cells.

It is found in the cell projection. The protein resides in the cilium. The protein localises to the cytoplasm. It localises to the cytoskeleton. Its subcellular location is the flagellum axoneme. In terms of biological role, functions as part of axonemal radial spoke complexes that play an important part in the motility of sperm and cilia. Does not seem to have nucleoside diphosphate kinase (NDPK) activity. Confers protection from cell death by BAX and alters the cellular levels of several antioxidant enzymes including GPX5. May play a role in spermiogenesis by increasing the ability of late-stage spermatids to eliminate reactive oxygen species. In Mus musculus (Mouse), this protein is Nucleoside diphosphate kinase homolog 5 (Nme5).